Reading from the N-terminus, the 224-residue chain is Pyridoxine/pyridoxamine 5'-phosphate oxidase (224 aa).

Substrate is bound by residues 19–22 (RGEY) and Lys-81. FMN contacts are provided by residues 76–81 (RSVLCK), 91–92 (FT), Lys-98, and Gln-120. The substrate site is built by Tyr-138 and Arg-142. Residues 155–156 (QS) and Trp-201 contribute to the FMN site. Substrate is bound at residue 207-209 (RMH). FMN is bound at residue Arg-211.

It belongs to the pyridoxamine 5'-phosphate oxidase family. In terms of assembly, homodimer. FMN serves as cofactor.

It catalyses the reaction pyridoxamine 5'-phosphate + O2 + H2O = pyridoxal 5'-phosphate + H2O2 + NH4(+). The enzyme catalyses pyridoxine 5'-phosphate + O2 = pyridoxal 5'-phosphate + H2O2. The protein operates within cofactor metabolism; pyridoxal 5'-phosphate salvage; pyridoxal 5'-phosphate from pyridoxamine 5'-phosphate: step 1/1. It functions in the pathway cofactor metabolism; pyridoxal 5'-phosphate salvage; pyridoxal 5'-phosphate from pyridoxine 5'-phosphate: step 1/1. Its function is as follows. Catalyzes the oxidation of either pyridoxine 5'-phosphate (PNP) or pyridoxamine 5'-phosphate (PMP) into pyridoxal 5'-phosphate (PLP). This Mycobacterium bovis (strain ATCC BAA-935 / AF2122/97) protein is Pyridoxine/pyridoxamine 5'-phosphate oxidase.